The sequence spans 2055 residues: Multiple PDZ domain protein (2055 aa).

In terms of domain architecture, L27 spans 1-63 (MLETIDKNRA…SLQQLKDQVN (63 aa)). In terms of domain architecture, PDZ 1 spans 138–225 (IFELLKPPCG…TVQLVIARGS (88 aa)). At Ser-231 the chain carries Phosphoserine. Positions 258-338 (TIELVNDGSG…RVKLMIARGA (81 aa)) constitute a PDZ 2 domain. The segment covering 348–360 (LGITLSSSTSSTS) has biased composition (low complexity). The tract at residues 348 to 372 (LGITLSSSTSSTSEMRVDASTQKND) is disordered. 3 consecutive PDZ domains span residues 378-464 (DVEL…MRKG), 546-627 (VAHV…CRRT), and 693-779 (SIEL…VAKP). A phosphoserine mark is found at Ser-783 and Ser-1066. Residues 996–1077 (TVTIAKGSSS…IGPDIKITYV (82 aa)) form the PDZ 6 domain. The interval 1111 to 1130 (PELPEREEGEGEESELQNAA) is disordered. Positions 1139-1231 (RVELWREPSK…PVVFMVQSII (93 aa)) constitute a PDZ 7 domain. At Arg-1158 the chain carries Omega-N-methylarginine. A compositionally biased stretch (polar residues) spans 1264-1274 (LTTDQAPSQSE). The segment at 1264-1299 (LTTDQAPSQSESETEKPALCNVPPSSPSVFSEMGSD) is disordered. The PDZ 8 domain maps to 1338-1421 (VIELEKGQSG…KVKIIFIRNA (84 aa)). Residues 1435–1445 (ADSPSSTSDSP) are compositionally biased toward low complexity. A disordered region spans residues 1435-1459 (ADSPSSTSDSPQNKEVEPCSTTSAS). The PDZ 9 domain maps to 1471 to 1552 (QLELPKDQGG…TVKLTVRAEN (82 aa)). The disordered stretch occupies residues 1557 to 1597 (AVPSSAVTVSGERKDNSQTPAVPAPDLEPIPSTSRSSTPAV). 2 consecutive PDZ domains span residues 1614-1697 (TIEI…YRDE) and 1710-1792 (TIEL…GRVK). The segment at 1795–1834 (PFHSERRPSQSSQVSESSLSSFTPPLSGINTSESLESNSK) is disordered. Phosphoserine is present on residues Ser-1803 and Ser-1809. Residues 1803–1815 (SQSSQVSESSLSS) are compositionally biased toward low complexity. Positions 1816–1834 (FTPPLSGINTSESLESNSK) are enriched in polar residues. PDZ domains lie at 1847–1933 (TVEI…VAGG) and 1972–2055 (TITL…MVLS).

In terms of assembly, interacts with CLDN5, DLG4, GRIN1, SYNGAP1, CAMK2A and CAMK2B, HTR2A, HTR2B, HTR2C, PLEKHA1/TAPP1 and PLEKHA2/TAPP2. Interacts with F11R/JAM, CLDN1, NG2, CXADR, CRB1, MPP4 and PALS1. Interacts with FAT4 (via cytoplasmic domain). Interacts with DLL1. In terms of tissue distribution, in the brain, it is strongly expressed in the choroid plexus. Within the hippocampal formation, strongest expression was seen in the soma of CA1-4 pyramidal cells. Expressed in most neocortical regions with the strongest expression in piriform cortex and amygdaloid nuclei but also detected in the subiculum and olfactory bulb. In the cerebellum, the highest level of expression was found in Purkinje cells. Moderately expressed in the granular layer and molecular layer. Expressed in the pontine nuclei, parts of spinal trigeminal nuclei, and the principal sensory trigeminal nuclei of the metencephalon. Expressed in all thalamic and hypothalamic nuclei, and the substantia nigra (at protein level). Ubiquitously expressed.

The protein localises to the cell membrane. The protein resides in the apical cell membrane. It is found in the postsynaptic density. Its subcellular location is the cell projection. It localises to the dendrite. The protein localises to the cell junction. The protein resides in the tight junction. It is found in the synapse. Its subcellular location is the synaptosome. In terms of biological role, member of the NMDAR signaling complex that may play a role in control of AMPAR potentiation and synaptic plasticity in excitatory synapses. Promotes clustering of HT2RC at the cell surface. This is Multiple PDZ domain protein (Mpdz) from Mus musculus (Mouse).